A 387-amino-acid chain; its full sequence is Glutamyl-tRNA reductase 1 (387 aa).

Residues 45 to 48 (TCNR), Ser-96, 101 to 103 (ETD), and Gln-107 contribute to the substrate site. The Nucleophile role is filled by Cys-46. NADP(+) is bound at residue 175-180 (GAGSVG).

Belongs to the glutamyl-tRNA reductase family. As to quaternary structure, homodimer.

The enzyme catalyses (S)-4-amino-5-oxopentanoate + tRNA(Glu) + NADP(+) = L-glutamyl-tRNA(Glu) + NADPH + H(+). It participates in porphyrin-containing compound metabolism; protoporphyrin-IX biosynthesis; 5-aminolevulinate from L-glutamyl-tRNA(Glu): step 1/2. Catalyzes the NADPH-dependent reduction of glutamyl-tRNA(Glu) to glutamate 1-semialdehyde (GSA). The polypeptide is Glutamyl-tRNA reductase 1 (Pyrobaculum arsenaticum (strain DSM 13514 / JCM 11321 / PZ6)).